A 439-amino-acid polypeptide reads, in one-letter code: 26S proteasome regulatory subunit 4 (439 aa).

2 disordered regions span residues 1-48 (MGQN…AMKL) and 82-104 (ERLK…LRGT). Composition is skewed to basic and acidic residues over residues 12 to 25 (GEKK…KKYE) and 82 to 102 (ERLK…DDLR). Residue 225–232 (GPPGTGKT) coordinates ATP.

Belongs to the AAA ATPase family. As to quaternary structure, interacts with PSMD5.

The protein localises to the cytoplasm. It is found in the nucleus. In terms of biological role, the 26S proteasome is involved in the ATP-dependent degradation of ubiquitinated proteins. The regulatory (or ATPase) complex confers ATP dependency and substrate specificity to the 26S complex. This chain is 26S proteasome regulatory subunit 4 (Rpt2), found in Drosophila melanogaster (Fruit fly).